Reading from the N-terminus, the 363-residue chain is Aminomethyltransferase (363 aa).

It belongs to the GcvT family. The glycine cleavage system is composed of four proteins: P, T, L and H.

The enzyme catalyses N(6)-[(R)-S(8)-aminomethyldihydrolipoyl]-L-lysyl-[protein] + (6S)-5,6,7,8-tetrahydrofolate = N(6)-[(R)-dihydrolipoyl]-L-lysyl-[protein] + (6R)-5,10-methylene-5,6,7,8-tetrahydrofolate + NH4(+). Functionally, the glycine cleavage system catalyzes the degradation of glycine. The sequence is that of Aminomethyltransferase from Saccharophagus degradans (strain 2-40 / ATCC 43961 / DSM 17024).